The sequence spans 85 residues: Large ribosomal subunit protein bL27 (85 aa).

The interval 1–21 (MAHKKAGGSTRNGRDSESKRL) is disordered.

It belongs to the bacterial ribosomal protein bL27 family.

This is Large ribosomal subunit protein bL27 from Pseudomonas entomophila (strain L48).